The chain runs to 289 residues: Splicing factor C9orf78 homolog (289 aa).

The span at 1–12 (MPVVRKIFRRRR) shows a compositional bias: basic residues. 2 disordered regions span residues 1–27 (MPVV…SEEV) and 86–109 (GKDK…TNRR). Positions 5 to 58 (RKIFRRRRGDSESEEDEQDSEEVRLKLEETREVQNLRKRPNGVSAVALLVGEKV) are interaction with SNRNP200. Residues serine 15 and serine 17 each carry the phosphoserine modification. Position 147 is a phosphotyrosine (tyrosine 147). The segment covering 232–283 (LNAPIRRNKEEPKARPLRVGDTEKPEPERSPPNRKRPANEKATDDYHYEKFK) has biased composition (basic and acidic residues). The segment at 232–289 (LNAPIRRNKEEPKARPLRVGDTEKPEPERSPPNRKRPANEKATDDYHYEKFKKMNRRY) is disordered. A Phosphothreonine modification is found at threonine 253. Serine 261 is subject to Phosphoserine.

It belongs to the TLS1 family. As to quaternary structure, component of the spliceosome. Interacts with SNRNP200; the interaction is direct. Interacts with PRPF8.

The protein localises to the nucleus. It localises to the chromosome. The protein resides in the centromere. In terms of biological role, plays a role in pre-mRNA splicing by promoting usage of the upstream 3'-splice site at alternative NAGNAG splice sites; these are sites featuring alternative acceptor motifs separated by only a few nucleotides. May also modulate exon inclusion events. Plays a role in spliceosomal remodeling by displacing WBP4 from SNRNP200 and may act to inhibit SNRNP200 helicase activity. Binds U5 snRNA. Required for proper chromosome segregation. Not required for splicing of shelterin components. The sequence is that of Splicing factor C9orf78 homolog from Pongo abelii (Sumatran orangutan).